The following is a 271-amino-acid chain: NADPH-dependent 7-cyano-7-deazaguanine reductase (271 aa).

A substrate-binding site is contributed by 81 to 83 (IES). 83–84 (SK) contacts NADPH. Cys-177 functions as the Thioimide intermediate in the catalytic mechanism. Asp-184 (proton donor) is an active-site residue. 216-217 (HE) contacts substrate. Position 245–246 (245–246 (RG)) interacts with NADPH.

It belongs to the GTP cyclohydrolase I family. QueF type 2 subfamily. Homodimer.

The protein localises to the cytoplasm. It catalyses the reaction 7-aminomethyl-7-carbaguanine + 2 NADP(+) = 7-cyano-7-deazaguanine + 2 NADPH + 3 H(+). Its pathway is tRNA modification; tRNA-queuosine biosynthesis. In terms of biological role, catalyzes the NADPH-dependent reduction of 7-cyano-7-deazaguanine (preQ0) to 7-aminomethyl-7-deazaguanine (preQ1). In Xanthomonas campestris pv. campestris (strain B100), this protein is NADPH-dependent 7-cyano-7-deazaguanine reductase.